A 233-amino-acid polypeptide reads, in one-letter code: 5'-methylthioadenosine/S-adenosylhomocysteine nucleosidase (233 aa).

The Proton acceptor role is filled by Glu-12. Residues Gly-78, Ile-152, and Met-173–Glu-174 each bind substrate. The active-site Proton donor is Asp-197.

This sequence belongs to the PNP/UDP phosphorylase family. MtnN subfamily. In terms of assembly, homodimer.

It catalyses the reaction S-adenosyl-L-homocysteine + H2O = S-(5-deoxy-D-ribos-5-yl)-L-homocysteine + adenine. It carries out the reaction S-methyl-5'-thioadenosine + H2O = 5-(methylsulfanyl)-D-ribose + adenine. The enzyme catalyses 5'-deoxyadenosine + H2O = 5-deoxy-D-ribose + adenine. The protein operates within amino-acid biosynthesis; L-methionine biosynthesis via salvage pathway; S-methyl-5-thio-alpha-D-ribose 1-phosphate from S-methyl-5'-thioadenosine (hydrolase route): step 1/2. In terms of biological role, catalyzes the irreversible cleavage of the glycosidic bond in both 5'-methylthioadenosine (MTA) and S-adenosylhomocysteine (SAH/AdoHcy) to adenine and the corresponding thioribose, 5'-methylthioribose and S-ribosylhomocysteine, respectively. Also cleaves 5'-deoxyadenosine, a toxic by-product of radical S-adenosylmethionine (SAM) enzymes, into 5-deoxyribose and adenine. Thus, is required for in vivo function of the radical SAM enzymes biotin synthase and lipoic acid synthase, that are inhibited by 5'-deoxyadenosine accumulation. In Yersinia pseudotuberculosis serotype O:1b (strain IP 31758), this protein is 5'-methylthioadenosine/S-adenosylhomocysteine nucleosidase.